Here is a 498-residue protein sequence, read N- to C-terminus: Angiopoietin-4 (498 aa).

The first 22 residues, M1–A22, serve as a signal peptide directing secretion. The tract at residues E51 to G80 is disordered. Residues Q85–Q109 are a coiled coil. N96, N126, N158, N247, N295, N306, N332, and N424 each carry an N-linked (GlcNAc...) asparagine glycan. A coiled-coil region spans residues H186–Q254. Positions R277–G497 constitute a Fibrinogen C-terminal domain. Residues C286 and C315 are joined by a disulfide bond. A disulfide bridge connects residues C439 and C452.

Homodimer; disulfide-linked. Interacts with TEK/TIE2.

Its subcellular location is the secreted. Binds to TEK/TIE2, modulating ANGPT1 signaling. Can induce tyrosine phosphorylation of TEK/TIE2. Promotes endothelial cell survival, migration and angiogenesis. This is Angiopoietin-4 (ANGPT4) from Bos taurus (Bovine).